The primary structure comprises 880 residues: Pyruvate, phosphate dikinase (880 aa).

Residues 1-348 form an N-terminal region; it reads MNKLIYYFGN…LYILQTRTAK (348 aa). Arg-97 provides a ligand contact to ATP. A linker 1 region spans residues 349-405; that stretch reads RTAIAAINIAVQMVKEKLISKEQALMRIDPESLNQLLHTRIDYSKGLTSIAEGLPAS. Positions 406-503 are central; that stretch reads PGAATGIVVF…VIKQGDIITI (98 aa). Residue Thr-458 is modified to Phosphothreonine; by PDRP1. Catalysis depends on His-460, which acts as the Tele-phosphohistidine intermediate. Residues 504–538 form a linker 2 region; sequence DGGSGKIFLGEMPLIQPTFSEESKLILDWADEISS. A C-terminal region spans residues 539 to 880; it reads LKVRANAETV…AAQAKIKQGS (342 aa). Arg-566, Arg-622, Glu-750, Gly-771, Thr-772, Asn-773, and Asp-774 together coordinate substrate. Glu-750 is a binding site for Mg(2+). Residue Asp-774 coordinates Mg(2+). Catalysis depends on Cys-836, which acts as the Proton donor.

The protein belongs to the PEP-utilizing enzyme family. As to quaternary structure, homodimer. Requires Mg(2+) as cofactor. Post-translationally, phosphorylation of Thr-458 in the dark inactivates the enzyme. Dephosphorylation upon light stimulation reactivates the enzyme.

The catalysed reaction is pyruvate + phosphate + ATP = phosphoenolpyruvate + AMP + diphosphate + H(+). Its activity is regulated as follows. Activated by light-induced dephosphorylation. Inhibited by dark-induced phosphorylation. Both reactions are catalyzed by PDRP1. Catalyzes the reversible phosphorylation of pyruvate and phosphate. This Rickettsia prowazekii (strain Madrid E) protein is Pyruvate, phosphate dikinase (ppdK).